Here is a 124-residue protein sequence, read N- to C-terminus: Large ribosomal subunit protein bL12 (124 aa).

The segment at 99–124 (KEGMNKEDAEKAKADLEAAGAKVELK) is disordered. The span at 101-114 (GMNKEDAEKAKADL) shows a compositional bias: basic and acidic residues. A compositionally biased stretch (low complexity) spans 115–124 (EAAGAKVELK).

This sequence belongs to the bacterial ribosomal protein bL12 family. In terms of assembly, homodimer. Part of the ribosomal stalk of the 50S ribosomal subunit. Forms a multimeric L10(L12)X complex, where L10 forms an elongated spine to which 2 to 4 L12 dimers bind in a sequential fashion. Binds GTP-bound translation factors.

Functionally, forms part of the ribosomal stalk which helps the ribosome interact with GTP-bound translation factors. Is thus essential for accurate translation. This is Large ribosomal subunit protein bL12 from Campylobacter hominis (strain ATCC BAA-381 / DSM 21671 / CCUG 45161 / LMG 19568 / NCTC 13146 / CH001A).